Here is a 39-residue protein sequence, read N- to C-terminus: U-limacoditoxin(13)-As54 (39 aa).

Positions 1-23 (MSKYIVLLVVSAIALLQFSMIEC) are cleaved as a signal peptide. At Phe37 the chain carries Phenylalanine amide.

Belongs to the FARP (FMRFamide related peptide) family. As to expression, expressed by the venom secretory cell of the spine. The spine is a cuticular structure containing a single large nucleated venom-secreting cell at its base. It is an independent unit capable of producing, storing and injecting venom. On the back of A.stimulea caterpillars, spines are grouped together by 50 to 100 to form scoli, of which there are eight.

Its subcellular location is the secreted. Its function is as follows. Strongly activates (at 30 uM) the human neuropeptide FF receptor 1 (NPFF1R), a G-protein coupled receptor, with an effect that is equipotent to the endogenous RFRP-1 ligand in activating NPFFR1. Is toxic when injected into Drosophila melanogaster. Also shows a moderate anthelmintic activity against the parasitic nematode H.contortus (drug susceptible Kirby isolate) (IC(50)=20.1 uM). The chain is U-limacoditoxin(13)-As54 from Acharia stimulea (Saddleback caterpillar moth).